The primary structure comprises 140 residues: Profilin-2 (140 aa).

Residue Ala-2 is modified to N-acetylalanine.

Belongs to the profilin family. Occurs in many kinds of cells as a complex with monomeric actin in a 1:1 ratio. Interacts with PFN2. Interacts with ACTMAP (via N-terminus); the interaction may facilitate efficient cleavage of the acetylated N-terminus of immature actin by ACTMAP.

It localises to the cytoplasm. The protein resides in the cytoskeleton. In terms of biological role, binds to actin and affects the structure of the cytoskeleton. At high concentrations, profilin prevents the polymerization of actin, whereas it enhances it at low concentrations. By binding to PIP2, it inhibits the formation of IP3 and DG. The polypeptide is Profilin-2 (Pfn2) (Rattus norvegicus (Rat)).